The following is a 624-amino-acid chain: Diatom spindle kinesin-1 (624 aa).

Residues 1–59 (MNAANRRKSTSTVGITGRKDATRMKIEQMEKERKERRKTMMQRKEARKQEHMKNIEAGN) are disordered. Positions 1–85 (MNAANRRKST…QENKIGDKSP (85 aa)) are globular. 2 stretches are compositionally biased toward basic and acidic residues: residues 17–33 (GRKD…EKER) and 42–54 (QRKE…HMKN). Residues 95 to 411 (NICIAVRKRP…LRYADRIKEQ (317 aa)) enclose the Kinesin motor domain. 186-193 (GQTGSGKT) lines the ATP pocket. The stretch at 426 to 624 (SNREIMPSKE…LARQVQLTQY (199 aa)) forms a coiled coil. Over residues 478–511 (VDEEEADDEEGDYEEESEDLDYEDSEGQDYEEAV) the composition is skewed to acidic residues. The disordered stretch occupies residues 478–528 (VDEEEADDEEGDYEEESEDLDYEDSEGQDYEEAVESQYDHSQEAQEGEEEL).

It belongs to the TRAFAC class myosin-kinesin ATPase superfamily. Kinesin family. MCAK/KIF2 subfamily.

It localises to the cytoplasm. The protein resides in the cytoskeleton. Its function is as follows. Involved in anaphase spindle elongation. This Cylindrotheca fusiformis (Marine diatom) protein is Diatom spindle kinesin-1 (DSK1).